Here is a 443-residue protein sequence, read N- to C-terminus: Glutamate--tRNA ligase 1 (443 aa).

The short motif at 10–20 is the 'HIGH' region element; it reads PSPTGYIHVGN. The short motif at 241–245 is the 'KMSKS' region element; sequence ALSKR. Lysine 244 provides a ligand contact to ATP.

It belongs to the class-I aminoacyl-tRNA synthetase family. Glutamate--tRNA ligase type 1 subfamily. In terms of assembly, monomer.

The protein resides in the cytoplasm. The enzyme catalyses tRNA(Glu) + L-glutamate + ATP = L-glutamyl-tRNA(Glu) + AMP + diphosphate. Functionally, catalyzes the attachment of glutamate to tRNA(Glu) in a two-step reaction: glutamate is first activated by ATP to form Glu-AMP and then transferred to the acceptor end of tRNA(Glu). This Ruegeria pomeroyi (strain ATCC 700808 / DSM 15171 / DSS-3) (Silicibacter pomeroyi) protein is Glutamate--tRNA ligase 1.